The primary structure comprises 251 residues: Squamosa promoter-binding-like protein 4 (251 aa).

Residues 1–15 (MDWMPPPKPTSPRSP) are compositionally biased toward pro residues. The disordered stretch occupies residues 1–64 (MDWMPPPKPT…RAEEGGGGGG (64 aa)). Over residues 24–43 (AAVPGSSSGEVSAAAAAAAA) the composition is skewed to low complexity. The segment at 65 to 142 (EVRCQVEGCG…YDHNARRRKP (78 aa)) adopts an SBP-type zinc-finger fold. Zn(2+)-binding residues include Cys68, Cys73, Cys90, His93, Cys109, Cys112, His116, and Cys128. The short motif at 125–141 (KRSCRRRLYDHNARRRK) is the Bipartite nuclear localization signal element.

Expressed in stems, leaf sheaths, and young panicles.

It is found in the nucleus. Functionally, trans-acting factor that binds specifically to the consensus nucleotide sequence 5'-TNCGTACAA-3'. May be involved in panicle development. This Oryza sativa subsp. japonica (Rice) protein is Squamosa promoter-binding-like protein 4 (SPL4).